Consider the following 602-residue polypeptide: Leucine-rich repeat-containing protein 40 (602 aa).

A disordered region spans residues 1 to 22 (MSRLKRIAGQDPRAGFKEGGRD). A Phosphoserine modification is found at Ser-71. LRR repeat units lie at residues 83–104 (DLTKLIISNNKLQSLTDDLRLL), 106–127 (ALTVLDIHDNQLTSLPSAIREL), 129–150 (NLQKLNVSHNKLKILPEEITNL), 152–173 (NLKCLYLQHNELTCISEGFEQF), 175–196 (NLEDLDLSNNRLTTVPASFSSL), 198–219 (SLVRLNLSSNELKSLPAEINRM), 221–242 (RLKHLDCNSNLLETIPPELAGM), 244–265 (SLELLYLRRNKLRFLPEFPSCS), 266–286 (LLKELHVGENQIEMLEAEHLK), 290–311 (SILVLDLRDNKLKSVPDEIILL), 313–335 (SLERLDLSNNDISSLPYSLGNLH), 336–356 (LKFLALEGNPLRTIRREIINK), 400–421 (TLKILDYSDKQATLIPDEVFDA), 426–447 (IITSINFSKNQLCEIPKRMVEL), 450–472 (MVSDVNLSFNKLSFISLELCVLQ), 473–494 (KLTFLDLRNNFLNSLPEEVESL), 496–517 (RLQTINLSFNRFKMLPEVLYRI), 519–540 (TLETILISNNQVGSVDPQKMKM), 543–564 (NLTTLDLQNNDLLQIPPELGNC), and 566–586 (NLRTLLLDGNPFRVPRAAILM).

The chain is Leucine-rich repeat-containing protein 40 (LRRC40) from Pongo abelii (Sumatran orangutan).